The following is a 173-amino-acid chain: Ribosome maturation factor RimM (173 aa).

A PRC barrel domain is found at S94–L168.

The protein belongs to the RimM family. In terms of assembly, binds ribosomal protein uS19.

The protein resides in the cytoplasm. An accessory protein needed during the final step in the assembly of 30S ribosomal subunit, possibly for assembly of the head region. Essential for efficient processing of 16S rRNA. May be needed both before and after RbfA during the maturation of 16S rRNA. It has affinity for free ribosomal 30S subunits but not for 70S ribosomes. The protein is Ribosome maturation factor RimM of Lawsonia intracellularis (strain PHE/MN1-00).